A 92-amino-acid polypeptide reads, in one-letter code: RNA-binding protein Hfq (92 aa).

Positions 9 to 68 (DPYLNALRRERIPVSIYLVNGIKLQGQIESFDQFVILLKNTVSQMVYKHAISTVVPARSV) constitute a Sm domain. Over residues 69 to 81 (SHNNGGTSHTQQA) the composition is skewed to polar residues. A disordered region spans residues 69–92 (SHNNGGTSHTQQAPAVEAVADKAE).

Belongs to the Hfq family. Homohexamer.

RNA chaperone that binds small regulatory RNA (sRNAs) and mRNAs to facilitate mRNA translational regulation in response to envelope stress, environmental stress and changes in metabolite concentrations. Also binds with high specificity to tRNAs. The protein is RNA-binding protein Hfq of Actinobacillus pleuropneumoniae serotype 5b (strain L20).